Consider the following 58-residue polypeptide: Small ribosomal subunit protein bS21 (58 aa).

A disordered region spans residues 30–58; it reads SEVRKREHYEKPSVKRKKKSEAARKRKFK. Positions 31-42 are enriched in basic and acidic residues; sequence EVRKREHYEKPS. A compositionally biased stretch (basic residues) spans 43-58; sequence VKRKKKSEAARKRKFK.

This sequence belongs to the bacterial ribosomal protein bS21 family.

The chain is Small ribosomal subunit protein bS21 from Clostridium perfringens (strain ATCC 13124 / DSM 756 / JCM 1290 / NCIMB 6125 / NCTC 8237 / Type A).